Consider the following 326-residue polypeptide: Acetyl-coenzyme A carboxylase carboxyl transferase subunit alpha (326 aa).

Residues 44-298 enclose the CoA carboxyltransferase C-terminal domain; sequence QLESRAEQLR…KEALLFHLNT (255 aa).

The protein belongs to the AccA family. Acetyl-CoA carboxylase is a heterohexamer composed of biotin carboxyl carrier protein (AccB), biotin carboxylase (AccC) and two subunits each of ACCase subunit alpha (AccA) and ACCase subunit beta (AccD).

It localises to the cytoplasm. It catalyses the reaction N(6)-carboxybiotinyl-L-lysyl-[protein] + acetyl-CoA = N(6)-biotinyl-L-lysyl-[protein] + malonyl-CoA. Its pathway is lipid metabolism; malonyl-CoA biosynthesis; malonyl-CoA from acetyl-CoA: step 1/1. Its function is as follows. Component of the acetyl coenzyme A carboxylase (ACC) complex. First, biotin carboxylase catalyzes the carboxylation of biotin on its carrier protein (BCCP) and then the CO(2) group is transferred by the carboxyltransferase to acetyl-CoA to form malonyl-CoA. The sequence is that of Acetyl-coenzyme A carboxylase carboxyl transferase subunit alpha from Synechocystis sp. (strain ATCC 27184 / PCC 6803 / Kazusa).